Reading from the N-terminus, the 123-residue chain is Large-conductance mechanosensitive channel (123 aa).

Transmembrane regions (helical) follow at residues 14–34 and 67–87; these read VIDMAVGIIVGAAFTSIVKSL and GSFLNAVINFLIISFVVFLMV.

It belongs to the MscL family. In terms of assembly, homopentamer.

Its subcellular location is the cell membrane. In terms of biological role, channel that opens in response to stretch forces in the membrane lipid bilayer. May participate in the regulation of osmotic pressure changes within the cell. The sequence is that of Large-conductance mechanosensitive channel from Limosilactobacillus reuteri (strain DSM 20016) (Lactobacillus reuteri).